The primary structure comprises 829 residues: Periplasmic nitrate reductase (829 aa).

A signal peptide (tat-type signal) is located at residues 1–29 (MKMTRRAFVKANAAASAAAVAGVTLPASA). The region spanning 41–97 (IKWDKAPCRFCGTGCSVLVGTQNGRVVATQGDPEAPVNKGLNCIKGYFLSKIMYGKD) is the 4Fe-4S Mo/W bis-MGD-type domain. [4Fe-4S] cluster-binding residues include cysteine 48, cysteine 51, cysteine 55, and cysteine 83. Mo-bis(molybdopterin guanine dinucleotide) contacts are provided by residues lysine 85, glutamine 152, asparagine 177, cysteine 181, 214-221 (WGSNMAEM), 245-249 (STYYH), 264-266 (QSD), methionine 374, glutamine 378, asparagine 484, 510-511 (SD), lysine 533, aspartate 560, and 718-727 (TGRVLEHWHT). Position 794 (phenylalanine 794) interacts with substrate. Residues asparagine 802 and lysine 819 each contribute to the Mo-bis(molybdopterin guanine dinucleotide) site.

The protein belongs to the prokaryotic molybdopterin-containing oxidoreductase family. NasA/NapA/NarB subfamily. As to quaternary structure, component of the periplasmic nitrate reductase NapAB complex composed of NapA and NapB. [4Fe-4S] cluster is required as a cofactor. Mo-bis(molybdopterin guanine dinucleotide) serves as cofactor. In terms of processing, predicted to be exported by the Tat system. The position of the signal peptide cleavage has not been experimentally proven.

It is found in the periplasm. The enzyme catalyses 2 Fe(II)-[cytochrome] + nitrate + 2 H(+) = 2 Fe(III)-[cytochrome] + nitrite + H2O. In terms of biological role, catalytic subunit of the periplasmic nitrate reductase complex NapAB. Receives electrons from NapB and catalyzes the reduction of nitrate to nitrite. The sequence is that of Periplasmic nitrate reductase from Aliivibrio fischeri (strain ATCC 700601 / ES114) (Vibrio fischeri).